A 261-amino-acid chain; its full sequence is Cytochrome c oxidase subunit 3 (261 aa).

At 1–15 the chain is on the mitochondrial matrix side; the sequence is MTHQTHAYHMVNPSP. The chain crosses the membrane as a helical span at residues 16–34; the sequence is WPLTGALSALLMTSGLIMW. The Mitochondrial intermembrane segment spans residues 35–40; sequence FHFNST. A helical transmembrane segment spans residues 41–66; that stretch reads TLLMLGLTTNMLTMYQWWRDVVREST. The Mitochondrial matrix segment spans residues 67–72; sequence FQGHHT. The helical transmembrane segment at 73–105 threads the bilayer; the sequence is PNVQKGLRYGMILFIISEVLFFTGFFWAFYHSS. Topologically, residues 106–128 are mitochondrial intermembrane; sequence LAPTPELGGCWPPTGINPLNPLE. A helical membrane pass occupies residues 129-152; sequence VPLLNTSVLLASGVSITWAHHSLM. Residues 153-155 lie on the Mitochondrial matrix side of the membrane; sequence EGN. Residues 156–183 traverse the membrane as a helical segment; it reads RNHMLQALFITIALGVYFTLLQASEYYE. At 184–190 the chain is on the mitochondrial intermembrane side; the sequence is APFTISD. A helical membrane pass occupies residues 191–223; it reads GVYGSTFFVATGFHGLHVIIGSTFLIVCFFRQL. At 224–232 the chain is on the mitochondrial matrix side; that stretch reads KFHFTSNHH. A helical transmembrane segment spans residues 233–256; that stretch reads FGFEAAAWYWHFVDVVWLFLYVSI. The Mitochondrial intermembrane portion of the chain corresponds to 257–261; sequence YWWGS.

Belongs to the cytochrome c oxidase subunit 3 family. In terms of assembly, component of the cytochrome c oxidase (complex IV, CIV), a multisubunit enzyme composed of 14 subunits. The complex is composed of a catalytic core of 3 subunits MT-CO1, MT-CO2 and MT-CO3, encoded in the mitochondrial DNA, and 11 supernumerary subunits COX4I, COX5A, COX5B, COX6A, COX6B, COX6C, COX7A, COX7B, COX7C, COX8 and NDUFA4, which are encoded in the nuclear genome. The complex exists as a monomer or a dimer and forms supercomplexes (SCs) in the inner mitochondrial membrane with NADH-ubiquinone oxidoreductase (complex I, CI) and ubiquinol-cytochrome c oxidoreductase (cytochrome b-c1 complex, complex III, CIII), resulting in different assemblies (supercomplex SCI(1)III(2)IV(1) and megacomplex MCI(2)III(2)IV(2)).

The protein localises to the mitochondrion inner membrane. It carries out the reaction 4 Fe(II)-[cytochrome c] + O2 + 8 H(+)(in) = 4 Fe(III)-[cytochrome c] + 2 H2O + 4 H(+)(out). Component of the cytochrome c oxidase, the last enzyme in the mitochondrial electron transport chain which drives oxidative phosphorylation. The respiratory chain contains 3 multisubunit complexes succinate dehydrogenase (complex II, CII), ubiquinol-cytochrome c oxidoreductase (cytochrome b-c1 complex, complex III, CIII) and cytochrome c oxidase (complex IV, CIV), that cooperate to transfer electrons derived from NADH and succinate to molecular oxygen, creating an electrochemical gradient over the inner membrane that drives transmembrane transport and the ATP synthase. Cytochrome c oxidase is the component of the respiratory chain that catalyzes the reduction of oxygen to water. Electrons originating from reduced cytochrome c in the intermembrane space (IMS) are transferred via the dinuclear copper A center (CU(A)) of subunit 2 and heme A of subunit 1 to the active site in subunit 1, a binuclear center (BNC) formed by heme A3 and copper B (CU(B)). The BNC reduces molecular oxygen to 2 water molecules using 4 electrons from cytochrome c in the IMS and 4 protons from the mitochondrial matrix. The sequence is that of Cytochrome c oxidase subunit 3 (MT-CO3) from Gazella leptoceros (Sand gazelle).